The sequence spans 175 residues: Sec-independent protein translocase protein TatB (175 aa).

A helical membrane pass occupies residues 1–21 (MFDIGWSELVLIGVVALIAIG). 2 disordered regions span residues 100–132 (KPAETSSTTAIEAPATSSEALTTPTTPEAPTPE) and 155–175 (QAPVVAQDTAPSEAIKDAKAS). Positions 111-132 (EAPATSSEALTTPTTPEAPTPE) are enriched in low complexity.

The protein belongs to the TatB family. The Tat system comprises two distinct complexes: a TatABC complex, containing multiple copies of TatA, TatB and TatC subunits, and a separate TatA complex, containing only TatA subunits. Substrates initially bind to the TatABC complex, which probably triggers association of the separate TatA complex to form the active translocon.

The protein resides in the cell inner membrane. Functionally, part of the twin-arginine translocation (Tat) system that transports large folded proteins containing a characteristic twin-arginine motif in their signal peptide across membranes. Together with TatC, TatB is part of a receptor directly interacting with Tat signal peptides. TatB may form an oligomeric binding site that transiently accommodates folded Tat precursor proteins before their translocation. The polypeptide is Sec-independent protein translocase protein TatB (Bradyrhizobium diazoefficiens (strain JCM 10833 / BCRC 13528 / IAM 13628 / NBRC 14792 / USDA 110)).